The primary structure comprises 472 residues: Glycosyl hydrolase family 109 protein (472 aa).

The segment at residues 1-35 is a signal peptide (tat-type signal); it reads MSQTPAVSRRLLLGSAAATGALATGIGSAAPVAAA. Residues 68 to 69, Asp90, 139 to 142, His145, 159 to 160, and Asn188 each bind NAD(+); these read NR, WEFH, and EL. Residues Tyr217, Arg236, 248–251, and Tyr330 each bind substrate; that span reads YPMH. Tyr248 lines the NAD(+) pocket.

The protein belongs to the Gfo/Idh/MocA family. Glycosyl hydrolase 109 subfamily. Requires NAD(+) as cofactor. Predicted to be exported by the Tat system. The position of the signal peptide cleavage has not been experimentally proven.

Glycosidase. Has no alpha-N-acetylgalactosaminidase activity. The polypeptide is Glycosyl hydrolase family 109 protein (Streptomyces coelicolor (strain ATCC BAA-471 / A3(2) / M145)).